The primary structure comprises 158 residues: Endoribonuclease YbeY (158 aa).

Zn(2+) is bound by residues His-119, His-123, and Asp-129.

This sequence belongs to the endoribonuclease YbeY family. The cofactor is Zn(2+).

Its subcellular location is the cytoplasm. Functionally, single strand-specific metallo-endoribonuclease involved in late-stage 70S ribosome quality control and in maturation of the 3' terminus of the 16S rRNA. This chain is Endoribonuclease YbeY, found in Chlamydia pneumoniae (Chlamydophila pneumoniae).